Here is a 132-residue protein sequence, read N- to C-terminus: MRHRVAHRKFSRTSAHRMAMLLNMCISLIKHERISTTLPKAKELRPYVEKLITIGKVYHGKNLVYGKRLLISKIKNPDAANKLIDVLSIRYKSRNGGYTRIIKNGFRKGDSAPMAIIELVDRQIATVENNGS.

It belongs to the bacterial ribosomal protein bL17 family. Part of the 50S ribosomal subunit. Contacts protein L32.

The sequence is that of Large ribosomal subunit protein bL17 from Ehrlichia canis (strain Jake).